The following is a 70-amino-acid chain: Large ribosomal subunit protein bL31 (70 aa).

Residues cysteine 16, cysteine 18, cysteine 38, and cysteine 41 each coordinate Zn(2+).

Belongs to the bacterial ribosomal protein bL31 family. Type A subfamily. As to quaternary structure, part of the 50S ribosomal subunit. It depends on Zn(2+) as a cofactor.

In terms of biological role, binds the 23S rRNA. The polypeptide is Large ribosomal subunit protein bL31 (Vesicomyosocius okutanii subsp. Calyptogena okutanii (strain HA)).